The following is a 425-amino-acid chain: Septin-11 (425 aa).

Position 2 is an N-acetylalanine (alanine 2). A Phosphoserine modification is found at serine 9. One can recognise a Septin-type G domain in the interval glutamine 38–glutamate 304. The segment at glycine 48 to serine 55 is G1 motif. Residues glycine 48–serine 55, glycine 103, lysine 184–glutamate 192, glycine 238, and arginine 253 each bind GTP. The tract at residues aspartate 100–glycine 103 is G3 motif. Residues alanine 183 to aspartate 186 are G4 motif. A coiled-coil region spans residues glutamine 320–glutamine 410. The segment at lysine 399–asparagine 425 is disordered. The segment covering alanine 401–glutamine 416 has biased composition (low complexity).

This sequence belongs to the TRAFAC class TrmE-Era-EngA-EngB-Septin-like GTPase superfamily. Septin GTPase family. Septins polymerize into heterooligomeric protein complexes that form filaments, and can associate with cellular membranes, actin filaments and microtubules. Forms homooligomers. GTPase activity is required for filament formation. Interacts with SEPTIN7, SEPTIN9 and SEPTIN12.

The protein localises to the cytoplasm. The protein resides in the cytoskeleton. It localises to the synapse. Its subcellular location is the cell projection. It is found in the dendritic spine. The protein localises to the axon. In terms of biological role, filament-forming cytoskeletal GTPase. May play a role in cytokinesis (Potential). May play a role in the cytoarchitecture of neurons, including dendritic arborization and dendritic spines, and in GABAergic synaptic connectivity. This chain is Septin-11, found in Bos taurus (Bovine).